The chain runs to 782 residues: E3 ubiquitin-protein ligase SopA (782 aa).

The interval 137-171 (VSVSANNRPTVSEGRTPPVSPSLSLQATSSPSSPA) is disordered. A compositionally biased stretch (low complexity) spans 157–171 (PSLSLQATSSPSSPA). The active-site Glycyl thioester intermediate is cysteine 753.

The protein belongs to the SopA E3 ligase family. In terms of processing, ubiquitinated in the presence of host E1 ubiquitin-activating enzyme, E2 ubiquitin-conjugating enzyme and ubiquitin.

The protein resides in the secreted. It is found in the host cell. The catalysed reaction is S-ubiquitinyl-[E2 ubiquitin-conjugating enzyme]-L-cysteine + [acceptor protein]-L-lysine = [E2 ubiquitin-conjugating enzyme]-L-cysteine + N(6)-ubiquitinyl-[acceptor protein]-L-lysine.. Functionally, effector proteins function to alter host cell physiology and promote bacterial survival in host tissues. This protein is an E3 ubiquitin ligase that interferes with host's ubiquitination pathway. This chain is E3 ubiquitin-protein ligase SopA (sopA), found in Salmonella newport (strain SL254).